Reading from the N-terminus, the 222-residue chain is uncharacterized protein (222 aa).

The next 2 helical transmembrane spans lie at 22–42 (IRVI…FLYI) and 189–209 (AICL…FCLV).

It localises to the cell membrane. This is an uncharacterized protein from Escherichia coli (strain K12).